Reading from the N-terminus, the 255-residue chain is L-erythrulose-1-phosphate isomerase (255 aa).

His98 serves as the catalytic Electrophile. The Proton acceptor role is filled by Glu171. Substrate contacts are provided by Gly177 and Ser214.

Belongs to the triosephosphate isomerase family. Homodimer.

The protein resides in the cytoplasm. It carries out the reaction L-erythrulose 1-phosphate = D-erythrulose 4-phosphate. The protein operates within carbohydrate metabolism; erythritol degradation. Functionally, catalyzes the isomerization of D-erythrulose-4P to L-erythrulose-1P. This is L-erythrulose-1-phosphate isomerase from Rhizobium meliloti (strain 1021) (Ensifer meliloti).